The following is a 264-amino-acid chain: Accessory gland-specific peptide 26Aa (264 aa).

The N-terminal stretch at methionine 1–alanine 18 is a signal peptide. Positions methionine 1 to asparagine 138 are sufficient for promoting ovulation when expressed in females. N-linked (GlcNAc...) asparagine glycans are attached at residues asparagine 88, asparagine 122, asparagine 138, and asparagine 145. The segment at leucine 189–asparagine 219 is disordered. Basic residues predominate over residues lysine 194–serine 203. The tract at residues asparagine 219–leucine 264 is necessary and sufficient for homodimerization.

In terms of assembly, homodimer. As to quaternary structure, may form a homodimer. Post-translationally, glycosylation. Undergoes several cleavages as it is secreted and is further processed in the recipient female. The precursor molecule is proteolytically cleaved by the seminal metalloprotease Semp1 at Lys-48 to produce CP1-N and CP1-C. In terms of processing, cleaved at Lys-67 by Semp1 to generate CP2-N and CP2-C. Cleavage appears to take place in the mated female genital tract. Post-translationally, cleaved at Lys-117 by Semp1 to generate CP3-N and CP3-C. Cleavage appears to take place in the mated female genital tract. Produced in the male accessory glands and secreted into seminal fluid (at protein level). Detected in the main cells and secondary cells of the accessory glands of 1 day old males (at protein level). In 5 day old males, confined to the secondary cells and only reappears in the main cells after mating (at protein level). Produced in adult males 3-4 hr after eclosion, levels increase reaching a peak at day 3-5 which is maintained until at least day 10 of adulthood (at protein level). In unmated male adults, levels are maintained for the first 6 days of adulthood and then gradually decrease for at least the next 8 days. In mated females, detected in the genital tract 3 minutes after the start of mating (ASM) and is secreted into the female hemolymph via the posterior vaginal wall 5 minutes ASM (at protein level).

It is found in the secreted. Its subcellular location is the cytoplasm. Functionally, male seminal protein which enhances ovulation in female Drosophila by stimulating the release of oocytes by the ovary following mating. Acts by increasing octopamine (OA) neuronal signaling in the female genital tract leading to the postmating relaxation of the oviduct muscles. This activation of the OA signaling pathway is likely to indirectly contribute to the mating-dependent increase in the number of OA synaptic sites in the female reproductive tract. In terms of biological role, male seminal peptide which is able to enhance ovulation in female Drosophila. This Drosophila melanogaster (Fruit fly) protein is Accessory gland-specific peptide 26Aa.